The primary structure comprises 787 residues: LPS-assembly protein LptD (787 aa).

The first 39 residues, 1-39 (MPRKTLLPLVPACDAAPRRKRLAAALLAVPGLVPAVSQA), serve as a signal peptide directing secretion.

The protein belongs to the LptD family. In terms of assembly, component of the lipopolysaccharide transport and assembly complex. Interacts with LptE and LptA.

The protein resides in the cell outer membrane. Functionally, together with LptE, is involved in the assembly of lipopolysaccharide (LPS) at the surface of the outer membrane. The sequence is that of LPS-assembly protein LptD from Burkholderia thailandensis (strain ATCC 700388 / DSM 13276 / CCUG 48851 / CIP 106301 / E264).